Consider the following 423-residue polypeptide: Putative galacturan 1,4-alpha-galacturonidase C (423 aa).

The first 20 residues, 1–20 (MQLRASVLLSFLGLASVGHA), serve as a signal peptide directing secretion. Asparagine 92, asparagine 98, asparagine 118, asparagine 156, asparagine 179, and asparagine 191 each carry an N-linked (GlcNAc...) asparagine glycan. PbH1 repeat units follow at residues 215-236 (ATNI…AIKP) and 238-258 (SYNI…AIGS). Residue aspartate 229 is the Proton donor of the active site. Residues cysteine 231 and cysteine 248 are joined by a disulfide bond. Asparagine 245, asparagine 344, and asparagine 362 each carry an N-linked (GlcNAc...) asparagine glycan. Cysteines 379 and 385 form a disulfide. An N-linked (GlcNAc...) asparagine glycan is attached at asparagine 400.

It belongs to the glycosyl hydrolase 28 family.

It is found in the secreted. It catalyses the reaction [(1-&gt;4)-alpha-D-galacturonosyl](n) + H2O = alpha-D-galacturonate + [(1-&gt;4)-alpha-D-galacturonosyl](n-1). In terms of biological role, specific in hydrolyzing the terminal glycosidic bond of polygalacturonic acid and oligogalacturonates. The sequence is that of Putative galacturan 1,4-alpha-galacturonidase C (rgxC) from Aspergillus niger (strain ATCC MYA-4892 / CBS 513.88 / FGSC A1513).